A 195-amino-acid chain; its full sequence is Myelin basic protein (195 aa).

Alanine 2 bears the N-acetylalanine mark. Phosphoserine occurs at positions 8 and 13. Tyrosine 15 is modified (phosphotyrosine). Threonine 18 carries the post-translational modification Phosphothreonine. At serine 20 the chain carries Phosphoserine. Threonine 21 is subject to Phosphothreonine. A citrulline mark is found at arginine 26 and arginine 32. Threonine 36 is modified (phosphothreonine). A Phosphoserine modification is found at serine 41. An omega-N-methylarginine mark is found at arginine 44 and arginine 50. Residues phenylalanine 45–glycine 79 are disordered. Serine 57 is subject to Phosphoserine. Position 92 is a phosphothreonine (threonine 92). Phosphotyrosine is present on tyrosine 94. A Phosphoserine modification is found at serine 101. Phosphothreonine is present on residues threonine 104, threonine 119, and threonine 122. The interval isoleucine 117–serine 139 is disordered. Glutamine 127 is modified (deamidated glutamine). Arginine 131 bears the Omega-N-methylarginine; alternate mark. Arginine 131 bears the Symmetric dimethylarginine; alternate mark. Serine 139 carries the post-translational modification Phosphoserine. Position 146 is an N6-acetyllysine (lysine 146). Citrulline is present on arginine 154. A Deamidated glutamine modification is found at glutamine 172. Arginine 184 bears the Citrulline mark. At serine 186 the chain carries Phosphoserine. Serine 190 is modified (phosphoserine; by UHMK1). Position 195 is a citrulline (arginine 195).

This sequence belongs to the myelin basic protein family. In terms of assembly, homodimer. As in other animals, several charge isomers may be produced as a result of optional post-translational modifications, such as phosphorylation of serine or threonine residues, deamidation of glutamine or asparagine residues, citrullination and methylation of arginine residues. Post-translationally, arg-131 was found to be 44% monomethylated and 11% symmetrically dimethylated. In terms of processing, phosphorylated by TAOK2, VRK2, MAPK11, MAPK12, MAPK14 and MINK1. Proteolytically cleaved in B cell lysosomes by cathepsin CTSG which degrades the major immunogenic MBP epitope and prevents the activation of MBP-specific autoreactive T cells. As to expression, found in both the central and the peripheral nervous system.

The protein localises to the myelin membrane. Functionally, is, with PLP, the most abundant protein component of the myelin membrane in the CNS. Has a role in both the formation and stabilization of this compact multilayer arrangement of bilayers. Each splice variant and charge isomer may have a specialized function in the assembly of an optimized, biochemically functional myelin membrane. This chain is Myelin basic protein (Mbp), found in Rattus norvegicus (Rat).